We begin with the raw amino-acid sequence, 439 residues long: Glutamine synthetase (439 aa).

The GS beta-grasp domain maps to 12–93; it reads RSPKFVQLIF…VYGYIYKDGK (82 aa). In terms of domain architecture, GS catalytic spans 99–439; that stretch reads PRGVLKRVIE…EWELERYFFI (341 aa). Mg(2+)-binding residues include E122 and E124. E172 contacts ATP. E177 and E184 together coordinate Mg(2+). G229 lines the L-glutamate pocket. Residue H233 coordinates Mg(2+). Residues 235-237 and S237 contribute to the ATP site; that span reads HIS. Residues R283, E289, and R301 each coordinate L-glutamate. ATP-binding residues include R301 and R306. E318 contributes to the Mg(2+) binding site. R320 is an L-glutamate binding site.

The protein belongs to the glutamine synthetase family. In terms of assembly, oligomer of 12 subunits arranged in the form of two hexagons. It depends on Mg(2+) as a cofactor.

It is found in the cytoplasm. It catalyses the reaction L-glutamate + NH4(+) + ATP = L-glutamine + ADP + phosphate + H(+). In terms of biological role, probably involved in nitrogen metabolism via ammonium assimilation. Catalyzes the ATP-dependent biosynthesis of glutamine from glutamate and ammonia. This chain is Glutamine synthetase, found in Pyrococcus abyssi (strain GE5 / Orsay).